The primary structure comprises 164 residues: Phosphopantetheine adenylyltransferase (164 aa).

Ser9 lines the substrate pocket. ATP is bound by residues 9 to 10 (SF) and His17. Lys41, Val78, and Arg92 together coordinate substrate. Residues 93–95 (GLR), Glu103, and 128–134 (SRPITAT) each bind ATP.

The protein belongs to the bacterial CoaD family. In terms of assembly, homohexamer. Requires Mg(2+) as cofactor.

Its subcellular location is the cytoplasm. The enzyme catalyses (R)-4'-phosphopantetheine + ATP + H(+) = 3'-dephospho-CoA + diphosphate. It participates in cofactor biosynthesis; coenzyme A biosynthesis; CoA from (R)-pantothenate: step 4/5. Functionally, reversibly transfers an adenylyl group from ATP to 4'-phosphopantetheine, yielding dephospho-CoA (dPCoA) and pyrophosphate. In Agrobacterium fabrum (strain C58 / ATCC 33970) (Agrobacterium tumefaciens (strain C58)), this protein is Phosphopantetheine adenylyltransferase.